A 549-amino-acid polypeptide reads, in one-letter code: Glucose-6-phosphate isomerase (549 aa).

The Proton donor role is filled by E355. Active-site residues include H387 and K515.

Belongs to the GPI family.

It is found in the cytoplasm. The enzyme catalyses alpha-D-glucose 6-phosphate = beta-D-fructose 6-phosphate. It participates in carbohydrate biosynthesis; gluconeogenesis. Its pathway is carbohydrate degradation; glycolysis; D-glyceraldehyde 3-phosphate and glycerone phosphate from D-glucose: step 2/4. Functionally, catalyzes the reversible isomerization of glucose-6-phosphate to fructose-6-phosphate. The chain is Glucose-6-phosphate isomerase from Pasteurella multocida (strain Pm70).